The following is a 376-amino-acid chain: Phosphoserine aminotransferase (376 aa).

L-glutamate is bound at residue Arg-54. Pyridoxal 5'-phosphate-binding positions include Ala-88 to Thr-89, Trp-115, Thr-165, Asp-186, and Gln-209. Residue Lys-210 is modified to N6-(pyridoxal phosphate)lysine. Pyridoxal 5'-phosphate is bound at residue Asn-251–Thr-252.

This sequence belongs to the class-V pyridoxal-phosphate-dependent aminotransferase family. SerC subfamily. As to quaternary structure, homodimer. The cofactor is pyridoxal 5'-phosphate.

It localises to the cytoplasm. It catalyses the reaction O-phospho-L-serine + 2-oxoglutarate = 3-phosphooxypyruvate + L-glutamate. It carries out the reaction 4-(phosphooxy)-L-threonine + 2-oxoglutarate = (R)-3-hydroxy-2-oxo-4-phosphooxybutanoate + L-glutamate. The protein operates within amino-acid biosynthesis; L-serine biosynthesis; L-serine from 3-phospho-D-glycerate: step 2/3. Its pathway is cofactor biosynthesis; pyridoxine 5'-phosphate biosynthesis; pyridoxine 5'-phosphate from D-erythrose 4-phosphate: step 3/5. Its function is as follows. Catalyzes the reversible conversion of 3-phosphohydroxypyruvate to phosphoserine and of 3-hydroxy-2-oxo-4-phosphonooxybutanoate to phosphohydroxythreonine. The sequence is that of Phosphoserine aminotransferase from Rhodopirellula baltica (strain DSM 10527 / NCIMB 13988 / SH1).